A 1393-amino-acid chain; its full sequence is Rab3 GTPase-activating protein non-catalytic subunit (1393 aa).

The segment at arginine 36–cysteine 67 is disordered. Position 39 is a phosphoserine (serine 39). Over residues tryptophan 44–glycine 64 the composition is skewed to acidic residues. Serine 450 is modified (phosphoserine). Threonine 901 bears the Phosphothreonine mark. Serine 916 and serine 978 each carry phosphoserine.

Belongs to the Rab3-GAP regulatory subunit family. In terms of assembly, the Rab3 GTPase-activating complex is a heterodimer composed of RAB3GAP1 and RAB3GAP2. The Rab3 GTPase-activating complex interacts with DMXL2. Interacts with LMAN1. Ubiquitous.

The protein resides in the cytoplasm. Its subcellular location is the endoplasmic reticulum. Its function is as follows. Regulatory subunit of the Rab3 GTPase-activating (Rab3GAP) complex composed of RAB3GAP1 and RAB3GAP2, which has GTPase-activating protein (GAP) activity towards various Rab3 subfamily members (RAB3A, RAB3B, RAB3C and RAB3D), RAB5A and RAB43, and guanine nucleotide exchange factor (GEF) activity towards RAB18. As part of the Rab3GAP complex, acts as a GAP for Rab3 proteins by converting active RAB3-GTP to the inactive form RAB3-GDP. Rab3 proteins are involved in regulated exocytosis of neurotransmitters and hormones. The Rab3GAP complex acts as a GEF for RAB18 by promoting the conversion of inactive RAB18-GDP to the active form RAB18-GTP. Recruits and stabilizes RAB18 at the cis-Golgi membrane in human fibroblasts where RAB18 is most likely activated. Also involved in RAB18 recruitment at the endoplasmic reticulum (ER) membrane where it maintains proper ER structure. Required for normal eye and brain development. May participate in neurodevelopmental processes such as proliferation, migration and differentiation before synapse formation, and non-synaptic vesicular release of neurotransmitters. This Homo sapiens (Human) protein is Rab3 GTPase-activating protein non-catalytic subunit.